The primary structure comprises 85 residues: UPF0386 protein Meso_1721 (85 aa).

It belongs to the UPF0386 family.

This Chelativorans sp. (strain BNC1) protein is UPF0386 protein Meso_1721.